A 296-amino-acid chain; its full sequence is Maltose/maltodextrin transport system permease protein MalG (296 aa).

The Cytoplasmic segment spans residues 1–12 (MAMVQPKSQKWR). A helical transmembrane segment spans residues 13–35 (LLATHLLMFTFIAMILFPLLMVI). The Periplasmic portion of the chain corresponds to 36 to 88 (TISLRPGNFATGSLIPENISWEHWKLALGYSVVSPDGRVTPPPFPVMLWLWNS). The 197-residue stretch at 85 to 281 (LWNSVKVAFI…LPITIVFLVA (197 aa)) folds into the ABC transmembrane type-1 domain. The chain crosses the membrane as a helical span at residues 89 to 111 (VKVAFITAVGIVTLSTTCAYAFA). The Cytoplasmic segment spans residues 112 to 123 (RMHFRGKSTLLK). A helical membrane pass occupies residues 124 to 143 (GMLIFQMFPAVLSLVALYAL). Over 144-152 (FDRLGEYVP) the chain is Periplasmic. Residues 153–175 (FIGLNTHGGVIFAYLGGIALHVW) form a helical membrane-spanning segment. The Cytoplasmic segment spans residues 176 to 205 (TIKGYFETIDGSLEEAAALDGATPWQAFRM). A helical membrane pass occupies residues 206 to 228 (VLLPLSVPILAVVFILSFIGVIT). Residues 229 to 257 (EVPVASLLLRDVNNYTLAVGMQQYLNPQN) are Periplasmic-facing. The helical transmembrane segment at 258-280 (YLWGDFAAAAVLSALPITIVFLV) threads the bilayer. Residues 281–296 (AQRWLVSGLTAGGVKG) are Cytoplasmic-facing.

It belongs to the binding-protein-dependent transport system permease family. MalFG subfamily. In terms of assembly, the complex is composed of two ATP-binding proteins (MalK), two transmembrane proteins (MalG and MalF) and a solute-binding protein (MalE).

Its subcellular location is the cell inner membrane. Functionally, part of the ABC transporter complex MalEFGK involved in maltose/maltodextrin import. Probably responsible for the translocation of the substrate across the membrane. The sequence is that of Maltose/maltodextrin transport system permease protein MalG (malG) from Photorhabdus laumondii subsp. laumondii (strain DSM 15139 / CIP 105565 / TT01) (Photorhabdus luminescens subsp. laumondii).